A 729-amino-acid chain; its full sequence is Neurochondrin (729 aa).

Residue Ser-2 is modified to N-acetylserine. Ser-2 bears the Phosphoserine mark. S-palmitoyl cysteine attachment occurs at residues Cys-3 and Cys-4. Arg-75 is subject to Asymmetric dimethylarginine. At Ser-448 the chain carries Phosphoserine.

The protein belongs to the neurochondrin family. As to quaternary structure, interacts with MCHR1. Interacts with SEMA4C. Interacts with DIAPH1 (via FH3 domain). Interacts with GRM5. Post-translationally, palmitoylated. Palmitoylation by ZDHHC1, ZDHHC3 and ZDHHC11 regulates the association of NCDN with endosome membranes. May also be palmitoylated by ZDHHC7.

The protein localises to the cytoplasm. It localises to the cytosol. Its subcellular location is the endosome membrane. The protein resides in the cell projection. It is found in the dendrite. The protein localises to the postsynapse. Functionally, probably involved in signal transduction, in the nervous system, via increasing cell surface localization of GRM5 and positively regulating its signaling. Required for the spatial learning process. Acts as a negative regulator of Ca(2+)-calmodulin-dependent protein kinase 2 (CaMK2) phosphorylation. May play a role in modulating melanin-concentrating hormone-mediated functions via its interaction with MCHR1 that interferes with G protein-coupled signal transduction. May be involved in bone metabolism. May also be involved in neurite outgrowth. This chain is Neurochondrin (NCDN), found in Bos taurus (Bovine).